Consider the following 116-residue polypeptide: C-C motif chemokine 6 (116 aa).

An N-terminal signal peptide occupies residues 1-21; sequence MRNSKTAISFFILVAVLGSQA. 3 disulfides stabilise this stretch: C50-C73, C51-C89, and C60-C100.

This sequence belongs to the intercrine beta (chemokine CC) family. The N-terminal is proteolytically cleaved by proteases associated with inflammatory responses. The processed forms CL6(22-95) and CCL6(23-95) show increase in CCR1-mediated signaling and chemotaxis assays in vitro. As to expression, expressed in myelopoietic bone marrow cultures stimulated by GM-CSF.

The protein localises to the secreted. In terms of biological role, chemotactic factor that attracts mostly macrophage, but it can also attract B cells, CD4(+) lymphocytes and eosinophils. The sequence is that of C-C motif chemokine 6 (Ccl6) from Mus musculus (Mouse).